A 1062-amino-acid chain; its full sequence is Zinc finger protein swm (1062 aa).

The PWI domain occupies 7-75; the sequence is DKLKDWLSVV…ERLFDAIASE (69 aa). Disordered regions lie at residues 119–145 and 171–340; these read ADSP…QASQ and KPAF…PDRV. Residues 134–145 show a composition bias toward polar residues; it reads DSNQVKLEQASQ. Residues 172–182 show a composition bias toward basic and acidic residues; it reads PAFDHKTKDSH. Residues 197–207 are compositionally biased toward low complexity; it reads SASPPGRSSGV. A compositionally biased stretch (gly residues) spans 208–220; that stretch reads SGSGGGGPGGAGL. Over residues 234 to 249 the composition is skewed to basic residues; that stretch reads SRRRRASLRSRSRSRS. 2 stretches are compositionally biased toward basic and acidic residues: residues 264 to 273 and 294 to 310; these read RRVNEREKTQ and RNFD…DRPR. A compositionally biased stretch (polar residues) spans 322–340; the sequence is RSMSPERNARRNQNSPDRV. The C3H1-type zinc finger occupies 363–391; the sequence is SHPRQRCRDFDEKGYCVRGETCPWDHGVN. The disordered stretch occupies residues 416-463; sequence EIWARSGGPPPGAGQGPVPPPTQPGQTTINPFSGNVRPTTLMSGSGPS. A compositionally biased stretch (pro residues) spans 423–438; that stretch reads GPPPGAGQGPVPPPTQ. Positions 444–461 are enriched in polar residues; the sequence is INPFSGNVRPTTLMSGSG. The region spanning 561–635 is the RRM domain; the sequence is SSLELRKVPR…RFIKVFWHND (75 aa). Disordered regions lie at residues 666-704, 716-741, 822-847, 886-920, and 1004-1062; these read NVPA…QANT, TTTA…LNPA, QDQL…KEQQ, SAAN…PTRV, and APVE…SWRR. Residues 721–733 show a composition bias toward gly residues; sequence GSAGGAAGAGAPG. Over residues 823–840 the composition is skewed to low complexity; sequence DQLQAQMQQQQQQQQPPV. Residues 1018–1037 are compositionally biased toward polar residues; the sequence is SLENPKQLIQSVSESESLLG. Positions 1046 to 1056 are enriched in acidic residues; the sequence is LEDEEEDEESE.

It is found in the nucleus. Its function is as follows. Negatively regulates Hedgehog (hh) protein signal in wing development. Regulates neural-specific glycosylation by binding to FucTA mRNA and facilitating its nuclear export in neural cells. In Drosophila melanogaster (Fruit fly), this protein is Zinc finger protein swm.